A 163-amino-acid polypeptide reads, in one-letter code: MRVPPAGTWALRPIWTEMGTPLRGSQAPGRIVLLLLVITPQWRWIPSKTPNVAPRSNQRCNPGGYLSGGVSLCASHSQPAALPNLGRLQKKLLQTRCKGRRMCPKAGDQTGGAFCMCDVSGGGGECVSGSGGGGESGRKTGTTSAMKDPRVLKCKLRVTNDLH.

This is an uncharacterized protein from Homo sapiens (Human).